Consider the following 98-residue polypeptide: Small ribosomal subunit protein uS19 (98 aa).

Disordered stretches follow at residues 1 to 30 (MARS…KKSV) and 78 to 98 (RTFH…PAKK). The segment covering 9 to 24 (PFADKHLTKKVEDANK) has biased composition (basic and acidic residues).

The protein belongs to the universal ribosomal protein uS19 family.

Protein S19 forms a complex with S13 that binds strongly to the 16S ribosomal RNA. In Anaeromyxobacter dehalogenans (strain 2CP-C), this protein is Small ribosomal subunit protein uS19.